A 1412-amino-acid polypeptide reads, in one-letter code: Protein MODIFIER OF SNC1 1 (1412 aa).

Disordered stretches follow at residues 1 to 276 (MTSS…QSYP), 384 to 437 (GYGS…TQRP), 472 to 798 (QQMQ…KQKQ), 827 to 888 (NEGV…DESI), 909 to 1144 (DIKV…WNDG), and 1156 to 1412 (AEEM…GDRN). A compositionally biased stretch (polar residues) spans 56–103 (SWGSKSSLNAWGTSSLSPRTESGPGSPSHLSNRPSSGGSVTRPSTADS). Residue serine 72 is modified to Phosphoserine. Over residues 109 to 119 (SSSSVAWDSNS) the composition is skewed to low complexity. Residues 120 to 135 (RPSSASGVFPSNQPSV) show a composition bias toward polar residues. Basic and acidic residues-rich tracts occupy residues 197-207 (AEKDTSEKSTR) and 236-267 (ANDR…EGQL). A compositionally biased stretch (basic and acidic residues) spans 478-488 (RNERREIRNDA). Composition is skewed to polar residues over residues 517–531 (KTRT…SSVV), 539–553 (QPRT…NKVS), 565–581 (SKNS…TNKN), and 610–639 (RIVN…TNTE). Basic and acidic residues predominate over residues 665–713 (DPKDNQRSTMRELARQRAQQRQKEEEERARDQRAKALAKLEELNRRSQI). Residues 667-717 (KDNQRSTMRELARQRAQQRQKEEEERARDQRAKALAKLEELNRRSQIYEEG) adopt a coiled-coil conformation. Composition is skewed to polar residues over residues 738–749 (GSHSSNATNSVE), 756–779 (KNTT…QQDN), and 829–847 (GVSS…SAES). Residues 850-862 (PKRKNNRNGKKKH) are compositionally biased toward basic residues. Residues 877–888 (VGKETKSGDESI) are compositionally biased toward basic and acidic residues. The residue at position 883 (serine 883) is a Phosphoserine. Polar residues-rich tracts occupy residues 914–938 (GDSS…NWKS) and 983–1003 (QTTV…QTSS). The segment covering 1006–1023 (KRVEIERYVPKPIVKEMA) has biased composition (basic and acidic residues). Polar residues predominate over residues 1056 to 1070 (LQPSGSTAGKSGSPS). Residues 1071–1084 (KSRHGNGRQGKHGR) show a composition bias toward basic residues. Over residues 1106 to 1137 (FVTSNQPIRGTVNYHSSKQTEQIAAKDQTTCN) the composition is skewed to polar residues. Basic and acidic residues-rich tracts occupy residues 1191-1202 (DPKKGNKRDFNK), 1222-1232 (KEGRVPGDHVW), and 1242-1251 (GGRESTRDKP). Composition is skewed to polar residues over residues 1266–1286 (GFTT…QNRS) and 1293–1307 (VEQN…NTGQ). Composition is skewed to basic and acidic residues over residues 1338–1351 (SNRD…HYEY) and 1359–1369 (YDGERSREQSK). Low complexity predominate over residues 1384–1397 (QGQQRQGGYQQQRG). Residues 1400–1412 (GRNGGHGFTGDRN) show a composition bias toward gly residues.

Interacts with TCP14 and TCP15.

Functionally, involved in the regulation of the chromatin structure and DNA methylation at the SNC1 locus. Regulates the expression of SNC1 at chromatin level. This chain is Protein MODIFIER OF SNC1 1 (MOS1), found in Arabidopsis thaliana (Mouse-ear cress).